The following is a 194-amino-acid chain: Accessory gene regulator protein B (194 aa).

The next 5 membrane-spanning stretches (helical) occupy residues 44 to 64 (IVVY…LTHL), 80 to 100 (SSLL…YLII), 107 to 127 (FVLL…APAA), 142 to 162 (KILS…TKEP), and 163 to 183 (VNKL…PIFF).

This sequence belongs to the AgrB family.

The protein localises to the cell membrane. Its function is as follows. Essential for the production of a quorum sensing system signal molecule, the autoinducing peptide (AIP). This quorum sensing system is responsible for the regulation of the expression of virulence factor genes. Involved in the proteolytic processing of AgrD, the precursor of AIP. This chain is Accessory gene regulator protein B, found in Staphylococcus epidermidis.